A 782-amino-acid polypeptide reads, in one-letter code: Endonuclease MutS2 (782 aa).

Glycine 336–threonine 343 serves as a coordination point for ATP. The Smr domain maps to leucine 707 to lysine 782.

Belongs to the DNA mismatch repair MutS family. MutS2 subfamily. As to quaternary structure, homodimer. Binds to stalled ribosomes, contacting rRNA.

Endonuclease that is involved in the suppression of homologous recombination and thus may have a key role in the control of bacterial genetic diversity. In terms of biological role, acts as a ribosome collision sensor, splitting the ribosome into its 2 subunits. Detects stalled/collided 70S ribosomes which it binds and splits by an ATP-hydrolysis driven conformational change. Acts upstream of the ribosome quality control system (RQC), a ribosome-associated complex that mediates the extraction of incompletely synthesized nascent chains from stalled ribosomes and their subsequent degradation. Probably generates substrates for RQC. The polypeptide is Endonuclease MutS2 (Staphylococcus carnosus (strain TM300)).